A 275-amino-acid polypeptide reads, in one-letter code: Translation initiation factor 2 subunit alpha (275 aa).

The S1 motif domain maps to 12 to 83 (GELVVATVKR…KKGHIDLSLR (72 aa)).

Belongs to the eIF-2-alpha family. As to quaternary structure, heterotrimer composed of an alpha, a beta and a gamma chain.

Functionally, eIF-2 functions in the early steps of protein synthesis by forming a ternary complex with GTP and initiator tRNA. The polypeptide is Translation initiation factor 2 subunit alpha (Pyrococcus furiosus (strain ATCC 43587 / DSM 3638 / JCM 8422 / Vc1)).